Here is a 711-residue protein sequence, read N- to C-terminus: Ribosomal RNA large subunit methyltransferase K/L (711 aa).

The region spanning 42 to 153 (DAQRAVLWSR…KGRATISVDL (112 aa)) is the THUMP domain.

The protein belongs to the methyltransferase superfamily. RlmKL family.

It is found in the cytoplasm. The enzyme catalyses guanosine(2445) in 23S rRNA + S-adenosyl-L-methionine = N(2)-methylguanosine(2445) in 23S rRNA + S-adenosyl-L-homocysteine + H(+). It catalyses the reaction guanosine(2069) in 23S rRNA + S-adenosyl-L-methionine = N(2)-methylguanosine(2069) in 23S rRNA + S-adenosyl-L-homocysteine + H(+). Its function is as follows. Specifically methylates the guanine in position 2445 (m2G2445) and the guanine in position 2069 (m7G2069) of 23S rRNA. This Xanthomonas oryzae pv. oryzae (strain KACC10331 / KXO85) protein is Ribosomal RNA large subunit methyltransferase K/L.